The sequence spans 1086 residues: ATP-dependent helicase/deoxyribonuclease subunit B (1086 aa).

It belongs to the helicase family. AddB/RexB type 2 subfamily. In terms of assembly, heterodimer of AddA and RexB. Mg(2+) serves as cofactor.

The heterodimer acts as both an ATP-dependent DNA helicase and an ATP-dependent, dual-direction single-stranded exonuclease. Recognizes the chi site generating a DNA molecule suitable for the initiation of homologous recombination. This subunit has 5' -&gt; 3' nuclease activity but not helicase activity. The polypeptide is ATP-dependent helicase/deoxyribonuclease subunit B (Streptococcus uberis (strain ATCC BAA-854 / 0140J)).